A 528-amino-acid polypeptide reads, in one-letter code: Benzoylformate decarboxylase (528 aa).

Mg(2+) contacts are provided by Asn117, Leu118, and Arg120. The segment at 377 to 460 (TSTTAQMWQR…VIMNNGTYGA (84 aa)) is thiamine pyrophosphate binding. Residues Asp428, Asn455, and Thr457 each coordinate Ca(2+).

The protein belongs to the TPP enzyme family. Homotetramer. Requires Ca(2+) as cofactor. The cofactor is thiamine diphosphate. It depends on Mg(2+) as a cofactor.

The enzyme catalyses phenylglyoxylate + H(+) = benzaldehyde + CO2. Its pathway is aromatic compound metabolism; (R)-mandelate degradation; benzoate from (R)-mandelate: step 3/4. The protein is Benzoylformate decarboxylase (mdlC) of Pseudomonas putida (Arthrobacter siderocapsulatus).